The chain runs to 43 residues: uncharacterized protein (43 aa).

This is an uncharacterized protein from Escherichia coli (Bacteriophage T3).